We begin with the raw amino-acid sequence, 490 residues long: N-succinylglutamate 5-semialdehyde dehydrogenase (490 aa).

Position 224 to 229 (G224 to G229) interacts with NAD(+). Residues E247 and C281 contribute to the active site.

The protein belongs to the aldehyde dehydrogenase family. AstD subfamily.

It carries out the reaction N-succinyl-L-glutamate 5-semialdehyde + NAD(+) + H2O = N-succinyl-L-glutamate + NADH + 2 H(+). It functions in the pathway amino-acid degradation; L-arginine degradation via AST pathway; L-glutamate and succinate from L-arginine: step 4/5. Its function is as follows. Catalyzes the NAD-dependent reduction of succinylglutamate semialdehyde into succinylglutamate. The polypeptide is N-succinylglutamate 5-semialdehyde dehydrogenase (Hahella chejuensis (strain KCTC 2396)).